The chain runs to 69 residues: Large ribosomal subunit protein uL29 (69 aa).

This sequence belongs to the universal ribosomal protein uL29 family.

The chain is Large ribosomal subunit protein uL29 from Granulibacter bethesdensis (strain ATCC BAA-1260 / CGDNIH1).